We begin with the raw amino-acid sequence, 336 residues long: Fructose-1,6-bisphosphatase class 1 (336 aa).

Residues glutamate 92, aspartate 115, leucine 117, and aspartate 118 each coordinate Mg(2+). Residues aspartate 118–serine 121, asparagine 211, tyrosine 244, tyrosine 262–tyrosine 264, and lysine 274 each bind substrate. Residue glutamate 280 participates in Mg(2+) binding.

The protein belongs to the FBPase class 1 family. As to quaternary structure, homotetramer. Mg(2+) is required as a cofactor.

The protein localises to the cytoplasm. The enzyme catalyses beta-D-fructose 1,6-bisphosphate + H2O = beta-D-fructose 6-phosphate + phosphate. It functions in the pathway carbohydrate biosynthesis; gluconeogenesis. This chain is Fructose-1,6-bisphosphatase class 1, found in Vibrio cholerae serotype O1 (strain ATCC 39315 / El Tor Inaba N16961).